The following is a 305-amino-acid chain: UDP-3-O-acyl-N-acetylglucosamine deacetylase (305 aa).

His78, His237, and Asp241 together coordinate Zn(2+). Residue His264 is the Proton donor of the active site.

This sequence belongs to the LpxC family. It depends on Zn(2+) as a cofactor.

The enzyme catalyses a UDP-3-O-[(3R)-3-hydroxyacyl]-N-acetyl-alpha-D-glucosamine + H2O = a UDP-3-O-[(3R)-3-hydroxyacyl]-alpha-D-glucosamine + acetate. The protein operates within glycolipid biosynthesis; lipid IV(A) biosynthesis; lipid IV(A) from (3R)-3-hydroxytetradecanoyl-[acyl-carrier-protein] and UDP-N-acetyl-alpha-D-glucosamine: step 2/6. Its function is as follows. Catalyzes the hydrolysis of UDP-3-O-myristoyl-N-acetylglucosamine to form UDP-3-O-myristoylglucosamine and acetate, the committed step in lipid A biosynthesis. This is UDP-3-O-acyl-N-acetylglucosamine deacetylase from Burkholderia pseudomallei (strain 668).